Here is a 130-residue protein sequence, read N- to C-terminus: Flagellar assembly factor FliW (130 aa).

This sequence belongs to the FliW family. In terms of assembly, interacts with translational regulator CsrA and flagellin(s).

The protein resides in the cytoplasm. Its function is as follows. Acts as an anti-CsrA protein, binds CsrA and prevents it from repressing translation of its target genes, one of which is flagellin. Binds to flagellin and participates in the assembly of the flagellum. This Borreliella burgdorferi (strain ATCC 35210 / DSM 4680 / CIP 102532 / B31) (Borrelia burgdorferi) protein is Flagellar assembly factor FliW.